The sequence spans 393 residues: NAD(P)H-quinone oxidoreductase subunit H, chloroplastic (393 aa).

The protein belongs to the complex I 49 kDa subunit family. NDH is composed of at least 16 different subunits, 5 of which are encoded in the nucleus.

It is found in the plastid. The protein resides in the chloroplast thylakoid membrane. It carries out the reaction a plastoquinone + NADH + (n+1) H(+)(in) = a plastoquinol + NAD(+) + n H(+)(out). The catalysed reaction is a plastoquinone + NADPH + (n+1) H(+)(in) = a plastoquinol + NADP(+) + n H(+)(out). In terms of biological role, NDH shuttles electrons from NAD(P)H:plastoquinone, via FMN and iron-sulfur (Fe-S) centers, to quinones in the photosynthetic chain and possibly in a chloroplast respiratory chain. The immediate electron acceptor for the enzyme in this species is believed to be plastoquinone. Couples the redox reaction to proton translocation, and thus conserves the redox energy in a proton gradient. The chain is NAD(P)H-quinone oxidoreductase subunit H, chloroplastic from Spinacia oleracea (Spinach).